The sequence spans 324 residues: Mating-type protein A-3 (324 aa).

The segment at residues 147-215 (TSRPRNQFVL…RHRAENPHLY (69 aa)) is a DNA-binding region (HMG box).

The protein localises to the nucleus. Required, together with mating-type protein A-2, for efficient ascospore formation. This chain is Mating-type protein A-3 (mtA-3), found in Neurospora crassa (strain ATCC 24698 / 74-OR23-1A / CBS 708.71 / DSM 1257 / FGSC 987).